We begin with the raw amino-acid sequence, 159 residues long: Neuroglobin (159 aa).

Positions 3-151 (KLSEKDKELI…VVAAMSQGWA (149 aa)) constitute a Globin domain. Residues histidine 66 and histidine 98 each coordinate heme b.

This sequence belongs to the globin family. As to quaternary structure, monomer. Homodimers and homotetramers. Mainly monomeric but also detected as part of homodimers and homotetramers.

The protein localises to the cytoplasm. It localises to the cytosol. The protein resides in the mitochondrion matrix. The enzyme catalyses Fe(III)-heme b-[protein] + nitric oxide + H2O = Fe(II)-heme b-[protein] + nitrite + 2 H(+). In terms of biological role, monomeric globin with a bis-histidyl six-coordinate heme-iron atom through which it can bind dioxygen, carbon monoxide and nitric oxide. Could help transport oxygen and increase its availability to the metabolically active neuronal tissues, though its low quantity in tissues as well as its high affinity for dioxygen, which may limit its oxygen-releasing ability, argue against it. The ferrous/deoxygenated form exhibits a nitrite reductase activity and it could produce nitric oxide which in turn inhibits cellular respiration in response to hypoxia. In its ferrous/deoxygenated state, it may also exhibit GDI (Guanine nucleotide Dissociation Inhibitor) activity toward heterotrimeric G-alpha proteins, thereby regulating signal transduction to facilitate neuroprotective responses in the wake of hypoxia and associated oxidative stress. The protein is Neuroglobin (ngb) of Dissostichus mawsoni (Antarctic cod).